A 156-amino-acid chain; its full sequence is Egg-lysin (156 aa).

The N-terminal stretch at 1–18 (MKLLVLCVFAMMATLAVS) is a signal peptide.

As to quaternary structure, monomer. Homodimer. Molecules associate into dimers and then rapidly dissociate again. Interacts (as a monomer) with the egg vitelline layer protein VERL (via VERL repeats); each VERL chain can bind multiple copies of lysin. In terms of tissue distribution, sperm.

The protein localises to the cytoplasmic vesicle. The protein resides in the secretory vesicle. It localises to the acrosome lumen. Creates a 3 um hole in the egg vitelline layer through which the sperm passes. Does not have enzyme activity. Species-specific interaction between the sperm protein lysin and the egg protein VERL exposes a basic surface on lysin that may dissociate the egg vitelline layer via electrostatic repulsion. Plays a role in ensuring species-specific fertilization. The chain is Egg-lysin from Haliotis cracherodii (Black abalone).